A 329-amino-acid polypeptide reads, in one-letter code: Elongation factor Ts (329 aa).

The segment at 79–82 (TDFV) is involved in Mg(2+) ion dislocation from EF-Tu.

Belongs to the EF-Ts family.

It is found in the cytoplasm. Its function is as follows. Associates with the EF-Tu.GDP complex and induces the exchange of GDP to GTP. It remains bound to the aminoacyl-tRNA.EF-Tu.GTP complex up to the GTP hydrolysis stage on the ribosome. The chain is Elongation factor Ts from Phocaeicola vulgatus (strain ATCC 8482 / DSM 1447 / JCM 5826 / CCUG 4940 / NBRC 14291 / NCTC 11154) (Bacteroides vulgatus).